The sequence spans 392 residues: Putative nicotinate phosphoribosyltransferase (392 aa).

Tyr21, Phe138, and Thr179 together coordinate nicotinate. His182 carries the post-translational modification Phosphohistidine. Arg235 serves as a coordination point for nicotinate. The 5-phospho-alpha-D-ribose 1-diphosphate site is built by Ser240, Gly272, and Thr293. Zn(2+) contacts are provided by Cys330, Cys333, Cys348, and Cys350.

This sequence belongs to the NAPRTase family. Highly divergent. In terms of assembly, homodimer. Forms a trimer of dimers in the crystal. In terms of processing, transiently phosphorylated on a His residue during the reaction cycle. Phosphorylation strongly increases the affinity for substrates and increases the rate of nicotinate D-ribonucleotide production. Dephosphorylation regenerates the low-affinity form of the enzyme, leading to product release.

The catalysed reaction is nicotinate + 5-phospho-alpha-D-ribose 1-diphosphate + ATP + H2O = nicotinate beta-D-ribonucleotide + ADP + phosphate + diphosphate. Its pathway is cofactor biosynthesis; NAD(+) biosynthesis; nicotinate D-ribonucleotide from nicotinate: step 1/1. Catalyzes the synthesis of beta-nicotinate D-ribonucleotide from nicotinate and 5-phospho-D-ribose 1-phosphate at the expense of ATP. The chain is Putative nicotinate phosphoribosyltransferase from Thermoplasma acidophilum (strain ATCC 25905 / DSM 1728 / JCM 9062 / NBRC 15155 / AMRC-C165).